A 320-amino-acid chain; its full sequence is TATA box-binding protein-like 2 (320 aa).

The protein belongs to the TBP family. Expression is restricted to the gonads, and is higher in the ovary than the testis.

It localises to the nucleus. Functionally, TATA box-binding transcription factor. Members of the TBP family are differentially required to regulate transcription and development during early embryogenesis. Required for gastrulation. Regulates a large subset of genes that are ventrally expressed. Binds to a subset of promoters. The protein is TATA box-binding protein-like 2 of Xenopus laevis (African clawed frog).